Reading from the N-terminus, the 298-residue chain is GTP cyclohydrolase FolE2 (298 aa).

It belongs to the GTP cyclohydrolase IV family.

It carries out the reaction GTP + H2O = 7,8-dihydroneopterin 3'-triphosphate + formate + H(+). It participates in cofactor biosynthesis; 7,8-dihydroneopterin triphosphate biosynthesis; 7,8-dihydroneopterin triphosphate from GTP: step 1/1. Functionally, converts GTP to 7,8-dihydroneopterin triphosphate. This is GTP cyclohydrolase FolE2 from Xylella fastidiosa (strain M12).